A 258-amino-acid chain; its full sequence is MSILFYVIFLAYLRGIQGNNMDQRSLPEDSLNSLIIKLIQADILKNKLSKQMVDVKENYQSTLPKAEAPREPEQGEATRSEFQPMIATDTELLRQQRRYNSPRVLLSDSTPLEPPPLYLMEDYVGNPVVTNRTSPRRKRYAEHKSHRGEYSVCDSESLWVTDKSSAIDIRGHQVTVLGEIKTGNSPVKQYFYETRCKEARPVKNGCRGIDDKHWNSQCKTSQTYVRALTSENNKLVGWRWIRIDTSCVCALSRKIGRT.

Residues 1–18 (MSILFYVIFLAYLRGIQG) form the signal peptide. A propeptide spanning residues 19-139 (NNMDQRSLPE…TNRTSPRRKR (121 aa)) is cleaved from the precursor. A disordered region spans residues 60 to 85 (QSTLPKAEAPREPEQGEATRSEFQPM). Positions 67 to 79 (EAPREPEQGEATR) are enriched in basic and acidic residues. Asn-131 carries an N-linked (GlcNAc...) asparagine glycan. 3 cysteine pairs are disulfide-bonded: Cys-153–Cys-218, Cys-196–Cys-247, and Cys-206–Cys-249.

Belongs to the NGF-beta family. As to expression, brain and peripheral tissues.

The protein resides in the secreted. Functionally, seems to promote the survival of visceral and proprioceptive sensory neurons. This chain is Neurotrophin-3 (Ntf3), found in Rattus norvegicus (Rat).